A 457-amino-acid polypeptide reads, in one-letter code: tRNA-2-methylthio-N(6)-dimethylallyladenosine synthase (457 aa).

Residues 2–119 form the MTTase N-terminal domain; that stretch reads KKVFIKTFGC…LPELIDARRR (118 aa). 6 residues coordinate [4Fe-4S] cluster: Cys-11, Cys-48, Cys-82, Cys-156, Cys-160, and Cys-163. Positions 142 to 375 constitute a Radical SAM core domain; sequence RVEGPSAFVS…QATIDANMAR (234 aa). A TRAM domain is found at 378–448; it reads EGMVGSVQRI…PHSLRGDVVE (71 aa).

It belongs to the methylthiotransferase family. MiaB subfamily. As to quaternary structure, monomer. It depends on [4Fe-4S] cluster as a cofactor.

Its subcellular location is the cytoplasm. It catalyses the reaction N(6)-dimethylallyladenosine(37) in tRNA + (sulfur carrier)-SH + AH2 + 2 S-adenosyl-L-methionine = 2-methylsulfanyl-N(6)-dimethylallyladenosine(37) in tRNA + (sulfur carrier)-H + 5'-deoxyadenosine + L-methionine + A + S-adenosyl-L-homocysteine + 2 H(+). Functionally, catalyzes the methylthiolation of N6-(dimethylallyl)adenosine (i(6)A), leading to the formation of 2-methylthio-N6-(dimethylallyl)adenosine (ms(2)i(6)A) at position 37 in tRNAs that read codons beginning with uridine. The protein is tRNA-2-methylthio-N(6)-dimethylallyladenosine synthase of Ralstonia nicotianae (strain ATCC BAA-1114 / GMI1000) (Ralstonia solanacearum).